Here is a 507-residue protein sequence, read N- to C-terminus: Chromosomal replication initiator protein DnaA (507 aa).

Residues Met-1–Thr-112 are domain I, interacts with DnaA modulators. Residues Arg-99–Thr-162 form a disordered region. The segment covering Val-113–Thr-127 has biased composition (polar residues). The interval Val-113–Thr-166 is domain II. The tract at residues Ser-167 to Ala-383 is domain III, AAA+ region. 4 residues coordinate ATP: Gly-211, Gly-213, Lys-214, and Thr-215. Positions Ser-384–Arg-507 are domain IV, binds dsDNA.

Belongs to the DnaA family. Oligomerizes as a right-handed, spiral filament on DNA at oriC.

It is found in the cytoplasm. Its function is as follows. Plays an essential role in the initiation and regulation of chromosomal replication. ATP-DnaA binds to the origin of replication (oriC) to initiate formation of the DNA replication initiation complex once per cell cycle. Binds the DnaA box (a 9 base pair repeat at the origin) and separates the double-stranded (ds)DNA. Forms a right-handed helical filament on oriC DNA; dsDNA binds to the exterior of the filament while single-stranded (ss)DNA is stabiized in the filament's interior. The ATP-DnaA-oriC complex binds and stabilizes one strand of the AT-rich DNA unwinding element (DUE), permitting loading of DNA polymerase. After initiation quickly degrades to an ADP-DnaA complex that is not apt for DNA replication. Binds acidic phospholipids. In Mycobacterium bovis (strain BCG / Tokyo 172 / ATCC 35737 / TMC 1019), this protein is Chromosomal replication initiator protein DnaA.